Consider the following 172-residue polypeptide: Cyclin-L1 (172 aa).

Residues 1–36 are disordered; the sequence is MASGPHSTATAAAAASSAAPSAGGSSSGTTTTTTTT. The tract at residues 88–168 is cyclin-like; that stretch reads ELIQAAGILL…LRGKSDQLHL (81 aa).

This sequence belongs to the cyclin family. Cyclin L subfamily. Interacts with POLR2A via its hyperphosphorylated C-terminal domain (CTD). Interacts with CDK11A, CDK11B, CDK12 and CDK13. May form a ternary complex with CDK11B and casein kinase II (CKII). Interacts with pre-mRNA-splicing factors, including at least SRSF1, SRSF2 and SRSF7/SLU7.

It localises to the nucleus speckle. It is found in the nucleus. The protein localises to the nucleoplasm. In terms of biological role, involved in pre-mRNA splicing. Functions in association with cyclin-dependent kinases (CDKs). May play a role in the regulation of RNA polymerase II (pol II). Inhibited by the CDK-specific inhibitor CDKN1A/p21. This is Cyclin-L1 (CCNL1) from Pongo abelii (Sumatran orangutan).